A 446-amino-acid chain; its full sequence is MSTFIGQLVGFAAIVYLVWWYVVPPVCRLMRARRDAVRQQLTEAAEAADRLVEASQAHTKATEDAKVEAQRVVKEAVEDAKRIVEQLQAQADVEAERIKLQGARQVELLRAQLTRQLRLKFGHESVRQAAELVRNHVADAVQQSATVDRFLDDLDAMTPKGADVEYPLLAKMRSASRRALVDLADRFGAIAKSLDNQALYTLAGELVSVAKMLDREIVVTRYLTVPVEDEAPRVKLIDRLVSAHVGDPTMEILRAAVSERWSANTDLVDALEHISRQALLEVAEREDQIDEVEDQVFRFSRILDVAPRLAILLDDYAVPADSRVRLLCNVLQSASSVVNPIAVALLSQTVELLRGQPAKEAILFLAEVAVARRGEVVAQVSAAAEISDAQRTRLTEVLSRIYGHPVTVQMQIDAALLGGLSIVVGDEVIDGTLSSCLVAAEAALPD.

The ATP synthase subunit b stretch occupies residues methionine 1–leucine 168. A helical transmembrane segment spans residues phenylalanine 4–proline 24. The segment at leucine 169 to aspartate 446 is ATP synthase subunit delta.

This sequence in the N-terminal section; belongs to the ATPase B chain family. In the C-terminal section; belongs to the ATPase delta chain family. As to quaternary structure, F-type ATPases have 2 components, F(1) - the catalytic core - and F(0) - the membrane proton channel. F(1) has five subunits: alpha(3), beta(3), gamma(1), delta(1), epsilon(1). F(0) has three main subunits: a(1), b(2) and c(10-14). The alpha and beta chains form an alternating ring which encloses part of the gamma chain. F(1) is attached to F(0) by a central stalk formed by the gamma and epsilon chains, while a peripheral stalk is formed by the delta and b chains.

The protein resides in the cell membrane. In terms of biological role, f(1)F(0) ATP synthase produces ATP from ADP in the presence of a proton or sodium gradient. F-type ATPases consist of two structural domains, F(1) containing the extramembraneous catalytic core and F(0) containing the membrane proton channel, linked together by a central stalk and a peripheral stalk. During catalysis, ATP synthesis in the catalytic domain of F(1) is coupled via a rotary mechanism of the central stalk subunits to proton translocation. Its function is as follows. This fusion protein includes a component of the F(0) channel (subunit b) and of the F(1) subunit (subunit delta). Two copies of subunit b and one of delta together form the peripheral 'stator' stalk which links F(1) to F(0). The protein is ATP synthase subunit b-delta (atpFH) of Mycobacterium leprae (strain Br4923).